We begin with the raw amino-acid sequence, 1376 residues long: Phospholipid-transporting ATPase DRS2 (1376 aa).

A compositionally biased stretch (gly residues) spans 1 to 10 (MAGRPTGGPQ). Disordered stretches follow at residues 1–151 (MAGR…AAAR) and 180–217 (GYSE…PKRD). The Cytoplasmic segment spans residues 1-306 (MAGRPTGGPQ…QIPGLSPTNR (306 aa)). Basic and acidic residues predominate over residues 40–50 (DLMRTYTRDQE). Residues 85 to 96 (QSSSSNNNNNNN) show a composition bias toward low complexity. The span at 97 to 115 (VSAPYSRSGRQYSQTSDLG) shows a compositional bias: polar residues. The span at 191-203 (PGGGGGGAGGGGH) shows a compositional bias: gly residues. The chain crosses the membrane as a helical span at residues 307-327 (FTTIIPLVAVLMVSAGKELVE). The Extracellular segment spans residues 328–509 (DYRRKQADAA…KVEKKLNTLV (182 aa)). Asparagine 339, asparagine 433, and asparagine 490 each carry an N-linked (GlcNAc...) asparagine glycan. Residues 510-530 (LLLVGILMVLSIISTVGDLII) form a helical membrane-spanning segment. Topologically, residues 531–559 (RRVEGDAISYLMLDQPDTAGKIAETFFKD) are cytoplasmic. A helical membrane pass occupies residues 560–580 (MVTYWVLFSSLVPISLFVTVE). The Extracellular portion of the chain corresponds to 581 to 1107 (MVKYWHGILI…VFSGAVIYES (527 aa)). Aspartate 625 functions as the 4-aspartylphosphate intermediate in the catalytic mechanism. ATP contacts are provided by aspartate 625, lysine 626, and threonine 627. Aspartate 625 is a Mg(2+) binding site. Threonine 627 contributes to the Mg(2+) binding site. The N-linked (GlcNAc...) asparagine glycan is linked to asparagine 679. Glutamate 720 and phenylalanine 761 together coordinate ATP. N-linked (GlcNAc...) asparagine glycosylation occurs at asparagine 762. Residues serine 763, lysine 766, lysine 784, arginine 817, threonine 818, threonine 898, glycine 899, aspartate 900, arginine 991, and lysine 997 each coordinate ATP. Mg(2+) is bound at residue aspartate 1018. ATP contacts are provided by asparagine 1021 and aspartate 1022. Mg(2+) is bound at residue aspartate 1022. An N-linked (GlcNAc...) asparagine glycan is attached at asparagine 1083. The helical transmembrane segment at 1108-1128 (WTLTFYNVFYTVLPPLALGIL) threads the bilayer. Residues 1129–1165 (DQFISARLLDRYPQLYSMGQQNQFFRMKVFIEWLLNA) lie on the Cytoplasmic side of the membrane. A helical membrane pass occupies residues 1166–1186 (VYHSIILYVFGELIWHGDLIL). The Extracellular portion of the chain corresponds to 1187-1190 (ENGQ). Residues 1191–1211 (IAGHWMWGTALYAPVLLTVLG) form a helical membrane-spanning segment. Lysine 1212 serves as a coordination point for a 1,2-diacyl-sn-glycero-3-phospho-(1D-myo-inositol 4-phosphate). The Cytoplasmic segment spans residues 1212–1224 (KAGLVTSNWTKYH). Residues 1225 to 1245 (VIAIPGSMAIWWIFIAVYGTV) traverse the membrane as a helical segment. The Extracellular portion of the chain corresponds to 1246–1257 (APMIPFSPEFHG). Residues 1258 to 1278 (IVPKLYSSPIFWLQSFALAIL) traverse the membrane as a helical segment. Residues 1279–1376 (CLLRDFAWKY…TSSRPQGQGT (98 aa)) are Cytoplasmic-facing. Positions 1282, 1286, 1287, 1298, and 1299 each coordinate a 1,2-diacyl-sn-glycero-3-phospho-(1D-myo-inositol 4-phosphate).

This sequence belongs to the cation transport ATPase (P-type) (TC 3.A.3) family. Type IV subfamily. Mg(2+) is required as a cofactor.

The protein localises to the cell membrane. It localises to the golgi apparatus. It is found in the trans-Golgi network membrane. The enzyme catalyses ATP + H2O + phospholipidSide 1 = ADP + phosphate + phospholipidSide 2.. The catalysed reaction is a 1,2-diacyl-sn-glycero-3-phospho-L-serine(out) + ATP + H2O = a 1,2-diacyl-sn-glycero-3-phospho-L-serine(in) + ADP + phosphate + H(+). It catalyses the reaction a 1,2-diacyl-sn-glycero-3-phosphoethanolamine(out) + ATP + H2O = a 1,2-diacyl-sn-glycero-3-phosphoethanolamine(in) + ADP + phosphate + H(+). Its function is as follows. Catalytic component of a P4-ATPase flippase complex which catalyzes the hydrolysis of ATP coupled to the transport of phosphatidylserine and small amounts of ethanolamine from the lumen to the cytosolic leaflet of the trans-Golgi network and cell membrane and ensures the maintenance of asymmetric distribution of phospholipids. Required for efficient vesicle transport during toxin secretion. The sequence is that of Phospholipid-transporting ATPase DRS2 (DRS2) from Verticillium dahliae (strain VdLs.17 / ATCC MYA-4575 / FGSC 10137) (Verticillium wilt).